The sequence spans 113 residues: Large ribosomal subunit protein bL19 (113 aa).

It belongs to the bacterial ribosomal protein bL19 family.

Functionally, this protein is located at the 30S-50S ribosomal subunit interface and may play a role in the structure and function of the aminoacyl-tRNA binding site. This Corynebacterium jeikeium (strain K411) protein is Large ribosomal subunit protein bL19.